Reading from the N-terminus, the 254-residue chain is Phytolongin Phyl1.1 (254 aa).

Residues 12-113 (CVSRDNQILY…TAMIGSINVE (102 aa)) enclose the Longin domain. The interval 138-173 (ELKSSNLGEQSEGSNSTKAPLLGRLSKQEKKKGKDH) is disordered. Positions 145 to 155 (GEQSEGSNSTK) are enriched in polar residues. A helical; Anchor for type IV membrane protein membrane pass occupies residues 226–246 (IVLAIDAAICLTLFGIWLAIC).

Belongs to the synaptobrevin family.

It is found in the membrane. Functionally, non-SNARE longin protein involved in membrane-trafficking machinery. The chain is Phytolongin Phyl1.1 from Arabidopsis thaliana (Mouse-ear cress).